A 330-amino-acid chain; its full sequence is Aspartate--ammonia ligase (330 aa).

The protein belongs to the class-II aminoacyl-tRNA synthetase family. AsnA subfamily.

It is found in the cytoplasm. It catalyses the reaction L-aspartate + NH4(+) + ATP = L-asparagine + AMP + diphosphate + H(+). It functions in the pathway amino-acid biosynthesis; L-asparagine biosynthesis; L-asparagine from L-aspartate (ammonia route): step 1/1. This Shigella sonnei (strain Ss046) protein is Aspartate--ammonia ligase.